We begin with the raw amino-acid sequence, 435 residues long: Eukaryotic peptide chain release factor subunit 1 (435 aa).

This sequence belongs to the eukaryotic release factor 1 family. In terms of assembly, heterodimer of two subunits, one of which binds GTP.

It localises to the cytoplasm. In terms of biological role, directs the termination of nascent peptide synthesis (translation) in response to the termination codons UAA, UAG and UGA. This chain is Eukaryotic peptide chain release factor subunit 1 (SU2), found in Podospora anserina (Pleurage anserina).